Consider the following 509-residue polypeptide: Putative ATP-dependent RNA helicase QP509L (509 aa).

A Helicase ATP-binding domain is found at 110–262 (KKLLPPYGRF…KIIIHHLGQP (153 aa)). 123–130 (LNTGLGKT) provides a ligand contact to ATP. A DEAH box motif is present at residues 215 to 218 (DEAH).

It belongs to the DEAD box helicase family. DEAH subfamily.

It catalyses the reaction ATP + H2O = ADP + phosphate + H(+). The chain is Putative ATP-dependent RNA helicase QP509L from African swine fever virus (isolate Tick/Malawi/Lil 20-1/1983) (ASFV).